Consider the following 1005-residue polypeptide: Protein TIC 214 (1005 aa).

Helical transmembrane passes span V25 to L45, F67 to L87, H91 to G111, S131 to G151, F177 to W197, and L304 to Y324. Disordered stretches follow at residues V457–E481 and K767–Q833. Residues K783–S810 show a composition bias toward basic residues. Positions K811–S824 are enriched in basic and acidic residues.

This sequence belongs to the TIC214 family. In terms of assembly, part of the Tic complex.

It is found in the plastid. Its subcellular location is the chloroplast inner membrane. Involved in protein precursor import into chloroplasts. May be part of an intermediate translocation complex acting as a protein-conducting channel at the inner envelope. This is Protein TIC 214 from Oenothera berteroana (Bertero's evening primrose).